A 146-amino-acid polypeptide reads, in one-letter code: Large ribosomal subunit protein uL13 (146 aa).

The interval 125 to 146 (YAGPKHPHAAQQPKVYEPRPRG) is disordered.

The protein belongs to the universal ribosomal protein uL13 family. In terms of assembly, part of the 50S ribosomal subunit.

In terms of biological role, this protein is one of the early assembly proteins of the 50S ribosomal subunit, although it is not seen to bind rRNA by itself. It is important during the early stages of 50S assembly. The sequence is that of Large ribosomal subunit protein uL13 from Roseiflexus sp. (strain RS-1).